Reading from the N-terminus, the 231-residue chain is 2-C-methyl-D-erythritol 4-phosphate cytidylyltransferase (231 aa).

This sequence belongs to the IspD/TarI cytidylyltransferase family. IspD subfamily.

The catalysed reaction is 2-C-methyl-D-erythritol 4-phosphate + CTP + H(+) = 4-CDP-2-C-methyl-D-erythritol + diphosphate. Its pathway is isoprenoid biosynthesis; isopentenyl diphosphate biosynthesis via DXP pathway; isopentenyl diphosphate from 1-deoxy-D-xylulose 5-phosphate: step 2/6. Catalyzes the formation of 4-diphosphocytidyl-2-C-methyl-D-erythritol from CTP and 2-C-methyl-D-erythritol 4-phosphate (MEP). This chain is 2-C-methyl-D-erythritol 4-phosphate cytidylyltransferase, found in Lysinibacillus sphaericus (strain C3-41).